A 465-amino-acid chain; its full sequence is Ribulose bisphosphate carboxylase large chain (465 aa).

Lys4 is subject to N6,N6,N6-trimethyllysine. Asn113 and Thr163 together coordinate substrate. The active-site Proton acceptor is Lys165. Lys167 provides a ligand contact to substrate. Mg(2+) contacts are provided by Lys191, Asp193, and Glu194. Residue Lys191 is modified to N6-carboxylysine. Residue His284 is the Proton acceptor of the active site. Substrate-binding residues include Arg285, His317, and Ser369.

The protein belongs to the RuBisCO large chain family. Type I subfamily. As to quaternary structure, heterohexadecamer of 8 large chains and 8 small chains; disulfide-linked. The disulfide link is formed within the large subunit homodimers. Mg(2+) is required as a cofactor. Post-translationally, the disulfide bond which can form in the large chain dimeric partners within the hexadecamer appears to be associated with oxidative stress and protein turnover.

It localises to the plastid. Its subcellular location is the chloroplast. The enzyme catalyses 2 (2R)-3-phosphoglycerate + 2 H(+) = D-ribulose 1,5-bisphosphate + CO2 + H2O. The catalysed reaction is D-ribulose 1,5-bisphosphate + O2 = 2-phosphoglycolate + (2R)-3-phosphoglycerate + 2 H(+). RuBisCO catalyzes two reactions: the carboxylation of D-ribulose 1,5-bisphosphate, the primary event in carbon dioxide fixation, as well as the oxidative fragmentation of the pentose substrate in the photorespiration process. Both reactions occur simultaneously and in competition at the same active site. The sequence is that of Ribulose bisphosphate carboxylase large chain from Epacris sp.